The sequence spans 634 residues: CREB-regulated transcription coactivator 1 (634 aa).

2 positions are modified to phosphoserine: S64 and S113. Disordered regions lie at residues 110-174 (RLGS…GSQD), 191-221 (TTSE…VPGI), 258-331 (LPTP…TLSP), and 357-479 (QAGS…HTST). Position 149 is a phosphothreonine (T149). At S151 the chain carries Phosphoserine; by SIK1 and SIK2. Positions 151–174 (SDSALHQSTMTPTQPESFSSGSQD) are enriched in polar residues. At T161 the chain carries Phosphothreonine. Residues 194–208 (EADKNLSKQAWDTKK) are compositionally biased toward basic and acidic residues. Positions 242-258 (TGGSLPDLTNIHFPSPL) match the Nuclear export signal motif. 3 stretches are compositionally biased toward polar residues: residues 271–283 (ALSS…NLAA), 296–305 (GMSTPGSSPQ), and 314–331 (LSLS…TLSP). Residues 362–397 (QPPPQPQPPPPPPPASQQPPPPPPPQAPVRLPPGGP) are compositionally biased toward pro residues. The span at 446 to 479 (QYRTSAGSPANQSPTSPVSNQGFSPGSSPQHTST) shows a compositional bias: polar residues.

The protein belongs to the TORC family. Binds, as a tetramer, through its N-terminal region, with the bZIP domain of CREB1. 'Arg-314' in the bZIP domain of CREB1 is essential for this interaction. Interaction, via its C-terminal, with TAF4, enhances recruitment of TAF4 to CREB1. Interacts with 14-3-3 proteins, including YWHAE/14-3-3 epsilon. Interacts with calmodulin-dependent catalytic subunit PPP3CA/calcineurin A. As to quaternary structure, (Microbial infection) Interacts with HTLV1 Tax. Phosphorylation/dephosphorylation states of Ser-151 are required for regulating transduction of CREB activity. TORCs are inactive when phosphorylated, and active when dephosphorylated at this site. This primary site of phosphorylation is mediated by SIKs (SIK1 and SIK2), is regulated by cAMP and calcium levels and is dependent on the phosphorylation of SIKs by LKB1. In terms of tissue distribution, highly expressed in adult and fetal brain. Located to specific regions such as the prefrontal cortex and cerebellum. Very low expression in other tissues such as heart, spleen, lung, skeletal muscle, salivary gland, ovary and kidney.

Its subcellular location is the cytoplasm. The protein resides in the nucleus. Functionally, transcriptional coactivator for CREB1 which activates transcription through both consensus and variant cAMP response element (CRE) sites. Acts as a coactivator, in the SIK/TORC signaling pathway, being active when dephosphorylated and acts independently of CREB1 'Ser-133' phosphorylation. Enhances the interaction of CREB1 with TAF4. Regulates the expression of specific CREB-activated genes such as the steroidogenic gene, StAR. Potent coactivator of PGC1alpha and inducer of mitochondrial biogenesis in muscle cells. In the hippocampus, involved in late-phase long-term potentiation (L-LTP) maintenance at the Schaffer collateral-CA1 synapses. May be required for dendritic growth of developing cortical neurons. In concert with SIK1, regulates the light-induced entrainment of the circadian clock. In response to light stimulus, coactivates the CREB-mediated transcription of PER1 which plays an important role in the photic entrainment of the circadian clock. In terms of biological role, (Microbial infection) Plays a role of coactivator for TAX activation of the human T-cell leukemia virus type 1 (HTLV-1) long terminal repeats (LTR). This is CREB-regulated transcription coactivator 1 from Homo sapiens (Human).